Consider the following 306-residue polypeptide: Ornithine carbamoyltransferase (306 aa).

Residues Ser46 to Thr49, Gln73, Arg97, and His124 to Gln127 each bind carbamoyl phosphate. Residues Asn156, Asp220, and Ser224–Met225 contribute to the L-ornithine site. Carbamoyl phosphate contacts are provided by residues Cys260–Leu261 and Arg288.

This sequence belongs to the aspartate/ornithine carbamoyltransferase superfamily. OTCase family.

Its subcellular location is the cytoplasm. It catalyses the reaction carbamoyl phosphate + L-ornithine = L-citrulline + phosphate + H(+). The protein operates within amino-acid biosynthesis; L-arginine biosynthesis; L-arginine from L-ornithine and carbamoyl phosphate: step 1/3. Reversibly catalyzes the transfer of the carbamoyl group from carbamoyl phosphate (CP) to the N(epsilon) atom of ornithine (ORN) to produce L-citrulline. The chain is Ornithine carbamoyltransferase from Campylobacter jejuni (strain RM1221).